Reading from the N-terminus, the 121-residue chain is Large ribosomal subunit protein uL14c (121 aa).

This sequence belongs to the universal ribosomal protein uL14 family. Part of the 50S ribosomal subunit.

It localises to the plastid. It is found in the chloroplast. Functionally, binds to 23S rRNA. This Guillardia theta (Cryptophyte) protein is Large ribosomal subunit protein uL14c.